The chain runs to 78 residues: NAD(P)H-quinone oxidoreductase subunit O (78 aa).

This sequence belongs to the complex I NdhO subunit family. In terms of assembly, NDH-1 can be composed of about 15 different subunits; different subcomplexes with different compositions have been identified which probably have different functions.

Its subcellular location is the cellular thylakoid membrane. It catalyses the reaction a plastoquinone + NADH + (n+1) H(+)(in) = a plastoquinol + NAD(+) + n H(+)(out). The enzyme catalyses a plastoquinone + NADPH + (n+1) H(+)(in) = a plastoquinol + NADP(+) + n H(+)(out). In terms of biological role, NDH-1 shuttles electrons from an unknown electron donor, via FMN and iron-sulfur (Fe-S) centers, to quinones in the respiratory and/or the photosynthetic chain. The immediate electron acceptor for the enzyme in this species is believed to be plastoquinone. Couples the redox reaction to proton translocation, and thus conserves the redox energy in a proton gradient. Cyanobacterial NDH-1 also plays a role in inorganic carbon-concentration. The chain is NAD(P)H-quinone oxidoreductase subunit O from Prochlorococcus marinus (strain AS9601).